The chain runs to 293 residues: Epimerase family protein SDR39U1 (293 aa).

NADP(+) is bound by residues 31 to 32 (SR), 58 to 59 (LA), E77, R82, and V160.

This sequence belongs to the NAD(P)-dependent epimerase/dehydratase family. SDR39U1 subfamily. In terms of tissue distribution, expressed in adrenal gland.

In terms of biological role, putative NADP-dependent oxidoreductase. This Homo sapiens (Human) protein is Epimerase family protein SDR39U1 (SDR39U1).